We begin with the raw amino-acid sequence, 916 residues long: Neurofilament medium polypeptide (916 aa).

The span at 1-10 shows a compositional bias: polar residues; the sequence is MSYTLDSLGN. Residues 1–51 are disordered; that stretch reads MSYTLDSLGNPSAYRRVTETRSSFSRVSGSPSSGFRSQSWSRGSPSTVSSS. Residue S2 is modified to N-acetylserine. The segment at 2–104 is head; sequence SYTLDSLGNP…KLSRSNEKEQ (103 aa). Residues 21 to 44 are compositionally biased toward low complexity; it reads RSSFSRVSGSPSSGFRSQSWSRGS. S30 bears the Phosphoserine mark. R42 carries the omega-N-methylarginine modification. T47 carries O-linked (GlcNAc) threonine glycosylation. S99 carries the post-translational modification Phosphoserine. Residues 101 to 412 form the IF rod domain; sequence EKEQLQGLND…KLLEGEETRF (312 aa). Residues 105 to 136 are coil 1A; that stretch reads LQGLNDRFAGYIEKVHYLEQQNKEIEAEIQAL. Residues 137–149 are linker 1; it reads RQKQASHAQLGDA. The interval 150 to 248 is coil 1B; sequence YDQEIRELRA…EEEVADLLAQ (99 aa). Residue S226 is modified to Phosphoserine. The linker 12 stretch occupies residues 249-265; it reads IQASHITVERKDYLKTD. Positions 266–287 are coil 2A; that stretch reads ISTALKEIRSQLESHSDQNMHQ. The segment at 288 to 291 is linker 2; the sequence is AEEW. The segment at 292–412 is coil 2B; that stretch reads FKCRYAKLTE…KLLEGEETRF (121 aa). Y320 is subject to Phosphotyrosine. Phosphoserine is present on residues S346 and S418. The segment at 413–916 is tail; that stretch reads STFAGSITGP…AIVKEVTQSD (504 aa). An O-linked (GlcNAc) threonine glycan is attached at T431. Residues S467 and S483 each carry the phosphoserine modification. The segment at 485-851 is disordered; that stretch reads KEEKKEAAEE…KKGGDKSEEK (367 aa). Residues 493-505 are compositionally biased toward acidic residues; that stretch reads EEKEEEPEAEEEE. S511 carries the post-translational modification Phosphoserine. Positions 521-541 are enriched in acidic residues; the sequence is KEEEGEKEEEEGQEEEEEEDE. Basic and acidic residues predominate over residues 542-561; that stretch reads GAKSDQAEEGGSEKEGSSEK. 4 positions are modified to phosphoserine: S545, S553, S558, and S559. Over residues 562–582 the composition is skewed to acidic residues; it reads EEGEQEEGETEAEAEGEEAEA. T571 carries the phosphothreonine modification. The segment covering 583–614 has biased composition (basic and acidic residues); that stretch reads KEEKKVEEKSEEVATKEELVADAKVEKPEKAK. 6 consecutive repeat copies span residues 614–626, 627–639, 640–652, 653–665, 666–678, and 679–691. Positions 614–691 are 6 X 13 AA approximate tandem repeats of K-S-P-V-[PS]-K-S-P-V-E-E-[KA]-[GAK]; it reads KSPVPKSPVE…VPKSPVEEAK (78 aa). A phosphoserine mark is found at S641 and S646. 2 positions are modified to phosphoserine: S680 and S685. Basic and acidic residues-rich tracts occupy residues 686-701, 707-742, and 755-778; these read PVEE…KGEQ, KEVK…KEEA, and VHLE…EKAG. S736 bears the Phosphoserine mark. Phosphoserine is present on residues S783, S821, and S837. A compositionally biased stretch (basic and acidic residues) spans 788-828; that stretch reads SDKGAKGSRKEDIAVNGEVEGKEEVEQETKEKGSGREEEKG. Residues 839-851 show a composition bias toward basic and acidic residues; it reads ADEKKGGDKSEEK.

The protein belongs to the intermediate filament family. In terms of assembly, forms heterodimers with NEFL; which can further hetero-oligomerize (in vitro). Forms heterodimers with INA (in vitro). In terms of processing, there are a number of repeats of the tripeptide K-S-P, NFM is phosphorylated on a number of the serines in this motif. It is thought that phosphorylation of NFM results in the formation of interfilament cross bridges that are important in the maintenance of axonal caliber. Phosphorylation seems to play a major role in the functioning of the larger neurofilament polypeptides (NF-M and NF-H), the levels of phosphorylation being altered developmentally and coincidentally with a change in the neurofilament function. Post-translationally, phosphorylated in the head and rod regions by the PKC kinase PKN1, leading to the inhibition of polymerization.

Its subcellular location is the cytoplasm. It localises to the cytoskeleton. The protein localises to the cell projection. The protein resides in the axon. Functionally, neurofilaments usually contain three intermediate filament proteins: NEFL, NEFM, and NEFH which are involved in the maintenance of neuronal caliber. May additionally cooperate with the neuronal intermediate filament proteins PRPH and INA to form neuronal filamentous networks. This is Neurofilament medium polypeptide (NEFM) from Homo sapiens (Human).